The chain runs to 1032 residues: MEGALTARDKVGVQDFVLLDAYTSESAFVDNLRKRFSENLIYTYIGTLLVSVNPYQELGIYTVSQMELYQGVNFFELPPHVYAIADNAYRMMCAELNNHFILISGESGAGKTEASKKILEYFAVTCPMTQSLQIARDRLLFSNPVLEAFGNARTLRNDNSSRFGKYMDIQFDFQGIPVGGHIISYLIEKSRVVYQNEGERNFHIFYQLLAGGEEERLSYLGLERDPQLYKYLSQGHCAKESSISDKNDWKTVSNAFSVIDFTEADLENLFGIIASVLHLGNIGFEEDDQGCATIPDTHEIKWIAKLLGVHPSVLLEALTHRKIEAKTEEVICPLTLELSVYARDAMAKAVYGRTFTWLVNKINSSLVNKVGQRILDPLLLLTWKTVIGLLDIYGFEVFDKNGFEQFCINYCNEKLQQLLIERTLKAEQAEYEMEGIEWEPIKYFNNKIICDLVEERHKGIISILDEECIRPGPATDLSFLEKLEEKVGKHAHFETRKLAGPKGRKRIGWMEFRLLHYAGEVTYCTKGFLEKNNDLLYRHLKEVLCKSKNIILRECFLLAELENRRRPPTVGTQFKNSLSSLLETLISKEPSYIRCIKPNDRKEPSKFDDFLIRHQIKYLGLMEHLRVRRAGFAYRRKYEHFLQRYKSLCPDTWPHWHGPPAEGVERLIKYIGYKPEEYKLGKTKIFIRFPRTLFATEDAFEFSKHQLVARIQATYKRCLGRREYVKKRQAAIKLEAHWRGALARKAIQRRKWAVRIIRKFIKGFISRNKPLCPDNEEFIVFVRKNYILNLRYHLPKTVLDKSWLRPPGILENASDLLRKMCVRNLVQKYCRGITAERKAMMQQKVVTSEIFRGRKDGYTESLNQPFVNSRIDEGDINPKVLQLISHEKIQYGVPVIKYDRKGFKARQRQLILTQKAAYVVELAKIKQKIEYSALKGVSTSNLSDGILVIHVSPEDSKQKGDAVLQCGHVFEAVTKLVMLVKKENIVNVVQGSLQFFISPGKEGTIVFDTGLEEQVYKNKNGQLTVVSVRRKS.

In terms of domain architecture, Myosin motor spans 12-701; the sequence is GVQDFVLLDA…TLFATEDAFE (690 aa). 105–112 contacts ATP; that stretch reads GESGAGKT. At Ser-365 the chain carries Phosphoserine. Positions 578-600 are actin-binding; sequence LSSLLETLISKEPSYIRCIKPND. IQ domains follow at residues 704–726 and 727–756; these read KHQL…EYVK and KRQA…AVRI. The 175-residue stretch at 855–1029 folds into the TH1 domain; that stretch reads KDGYTESLNQ…NGQLTVVSVR (175 aa).

Belongs to the TRAFAC class myosin-kinesin ATPase superfamily. Myosin family.

Myosins are actin-based motor molecules with ATPase activity. Unconventional myosins serve in intracellular movements. Their highly divergent tails are presumed to bind to membranous compartments, which would be moved relative to actin filaments. This is Unconventional myosin-Ih (MYO1H) from Homo sapiens (Human).